Here is a 152-residue protein sequence, read N- to C-terminus: Mitochondrial fission 1 protein (152 aa).

Residue methionine 1 is modified to N-acetylmethionine. Topologically, residues methionine 1–glycine 122 are cytoplasmic. Serine 10 is modified (phosphoserine). One copy of the TPR repeat lies at arginine 71–asparagine 104. The helical transmembrane segment at leucine 123–isoleucine 143 threads the bilayer. Over glycine 144–serine 152 the chain is Mitochondrial intermembrane.

It belongs to the FIS1 family. Interacts with DNM1L/DLP1 through the TPR region; may form part of a larger protein complex at the endoplasmic reticulum-mitochondrial interface during mitochondrial fission. Interacts with MARCHF5. Interacts with MIEF1. Interacts with PEX11A, PEX11B and PEX11G. Post-translationally, ubiquitinated by MARCHF5.

Its subcellular location is the mitochondrion outer membrane. The protein localises to the peroxisome membrane. Functionally, involved in the fragmentation of the mitochondrial network and its perinuclear clustering. Plays a minor role in the recruitment and association of the fission mediator dynamin-related protein 1 (DNM1L) to the mitochondrial surface and mitochondrial fission. May not be essential for the assembly of functional fission complexes and the subsequent membrane scission event. Also mediates peroxisomal fission. May act when the products of fission are directed toward mitochondrial homeostasis, mitophagy, or apoptosis. Can induce cytochrome c release from the mitochondrion to the cytosol, ultimately leading to apoptosis. The polypeptide is Mitochondrial fission 1 protein (Rattus norvegicus (Rat)).